A 163-amino-acid chain; its full sequence is MLKYIPAIFAIILSSNIAIASKNYDYISLTPLRHVADLIDSHITNIDHLFNNRLTFYESSSLKSKFITKDKQYIIVMEVPGFDKSQIKVKLNGKKLFIAGNIEDKNKANDSDNYMNKNFNYVISLYEDVDQKSISARLKNGILTIILPRIEVKEQDSREITIN.

One can recognise a sHSP domain in the interval 55–163 (TFYESSSLKS…EQDSREITIN (109 aa)).

The protein belongs to the small heat shock protein (HSP20) family.

The polypeptide is Small heat shock protein C1 (hspC1) (Rickettsia prowazekii (strain Madrid E)).